The primary structure comprises 215 residues: Protein slowmo (215 aa).

One can recognise a PRELI/MSF1 domain in the interval 1–170 (MKIWTSEHIF…VIGLINTEVK (170 aa)).

This sequence belongs to the slowmo family. Expressed in specific tissues such as the developing central nervous system (CNS) and both the male and female germline. In the CNS, it is restricted in a subset of cells during embryogenesis and early larval development. In embryos, it is also expressed in salivary glands. In the testis, expressed in somatic cyst cells throughout the distal region where the mitotic cysts develop, extending through to meiotic cysts.

It is found in the mitochondrion. Its function is as follows. Required to regulate peristaltic movement and also for germline proliferation in males and females. This chain is Protein slowmo (slmo), found in Drosophila melanogaster (Fruit fly).